The sequence spans 144 residues: Elicitor-responsive protein 3 (144 aa).

The C2 domain occupies methionine 1 to valine 103. Residues aspartate 20, aspartate 26, aspartate 73, aspartate 75, and aspartate 81 each contribute to the Ca(2+) site. Residues threonine 123 to serine 144 form a disordered region.

Ca(2+) is required as a cofactor.

The sequence is that of Elicitor-responsive protein 3 (ERG3) from Oryza sativa subsp. indica (Rice).